Consider the following 365-residue polypeptide: Growth-regulating factor 7 (365 aa).

The QLQ domain occupies 59-94; sequence PFTNAQLKELERQAMIYKYMIASIPVPFDLLVSSPS. The WRC domain occupies 107–151; it reads DLEPGRCRRTDGKKWRCAKEVVSNHKYCEKHLHRGRPRSRKHVEP. Short sequence motifs (bipartite nuclear localization signal) lie at residues 112–122 and 140–147; these read RCRRTDGKKWR and RGRPRSRK. Positions 137–147 are enriched in basic residues; the sequence is HLHRGRPRSRK. Disordered stretches follow at residues 137–187 and 332–365; these read HLHR…TLEP and IESYSLMETPTPSSSPSRVMKKMTSSVSDESSQV. The segment covering 337–365 has biased composition (polar residues); the sequence is LMETPTPSSSPSRVMKKMTSSVSDESSQV.

It belongs to the GRF family.

The protein resides in the nucleus. Its function is as follows. Transcription activator that plays a role in the regulation of cell expansion in leaf and cotyledons tissues. Component of a network formed by miR396, the GRFs and their interacting factors (GIFs) acting in the regulation of meristem function, at least partially through the control of cell proliferation. The sequence is that of Growth-regulating factor 7 (GRF7) from Arabidopsis thaliana (Mouse-ear cress).